We begin with the raw amino-acid sequence, 449 residues long: Serine/threonine-protein phosphatase 2A activator 2 (449 aa).

Disordered stretches follow at residues 1 to 72 and 378 to 416; these read MDSS…DPST and MSEQDPNALGSEENEEEGGEVEVYDDSDGKRHVHQPTGW. Pro residues predominate over residues 54–69; that stretch reads NPTPVPETPALPPRPD. Positions 389–403 are enriched in acidic residues; that stretch reads EENEEEGGEVEVYDD.

Belongs to the PTPA-type PPIase family.

It is found in the cytoplasm. The catalysed reaction is [protein]-peptidylproline (omega=180) = [protein]-peptidylproline (omega=0). PPIases accelerate the folding of proteins. It catalyzes the cis-trans isomerization of proline imidic peptide bonds in oligopeptides. Acts as a regulatory subunit for PP2A-like phosphatases modulating their activity or substrate specificity, probably by inducing a conformational change in the catalytic subunit, a direct target of the PPIase. Can reactivate inactive phosphatase PP2A-phosphatase methylesterase complexes (PP2Ai) in presence of ATP and Mg(2+) by dissociating the inactive form from the complex. In Neurospora crassa (strain ATCC 24698 / 74-OR23-1A / CBS 708.71 / DSM 1257 / FGSC 987), this protein is Serine/threonine-protein phosphatase 2A activator 2 (rrd-2).